The sequence spans 235 residues: Caffeoyl-CoA O-methyltransferase (235 aa).

Substrate is bound at residue Lys-8. Residues Val-52, Glu-74, 76 to 77 (GV), Ser-82, Asp-100, and Ala-129 each bind S-adenosyl-L-methionine. A substrate-binding site is contributed by Asp-151. Asp-151 contacts a divalent metal cation. Asp-153 contacts S-adenosyl-L-methionine. A divalent metal cation is bound by residues Asp-177 and Asn-178.

This sequence belongs to the class I-like SAM-binding methyltransferase superfamily. Cation-dependent O-methyltransferase family. CCoAMT subfamily. The cofactor is a divalent metal cation.

It carries out the reaction (E)-caffeoyl-CoA + S-adenosyl-L-methionine = (E)-feruloyl-CoA + S-adenosyl-L-homocysteine + H(+). Its pathway is aromatic compound metabolism; phenylpropanoid biosynthesis. Methylates caffeoyl-CoA to feruloyl-CoA and 5-hydroxyferuloyl-CoA to sinapoyl-CoA. Plays a role in the synthesis of feruloylated polysaccharides. Involved in the reinforcement of the plant cell wall. Also involved in the responding to wounding or pathogen challenge by the increased formation of cell wall-bound ferulic acid polymers. The chain is Caffeoyl-CoA O-methyltransferase from Populus kitakamiensis (Aspen).